A 231-amino-acid polypeptide reads, in one-letter code: 5'-methylthioadenosine/S-adenosylhomocysteine nucleosidase (231 aa).

Residue Glu13 is the Proton acceptor of the active site. Residues Gly79, Met154, and Met175 to Glu176 contribute to the substrate site. The active-site Proton donor is the Asp199.

It belongs to the PNP/UDP phosphorylase family. MtnN subfamily.

It carries out the reaction S-adenosyl-L-homocysteine + H2O = S-(5-deoxy-D-ribos-5-yl)-L-homocysteine + adenine. It catalyses the reaction S-methyl-5'-thioadenosine + H2O = 5-(methylsulfanyl)-D-ribose + adenine. The enzyme catalyses 5'-deoxyadenosine + H2O = 5-deoxy-D-ribose + adenine. The protein operates within amino-acid biosynthesis; L-methionine biosynthesis via salvage pathway; S-methyl-5-thio-alpha-D-ribose 1-phosphate from S-methyl-5'-thioadenosine (hydrolase route): step 1/2. In terms of biological role, catalyzes the irreversible cleavage of the glycosidic bond in both 5'-methylthioadenosine (MTA) and S-adenosylhomocysteine (SAH/AdoHcy) to adenine and the corresponding thioribose, 5'-methylthioribose and S-ribosylhomocysteine, respectively. Also cleaves 5'-deoxyadenosine, a toxic by-product of radical S-adenosylmethionine (SAM) enzymes, into 5-deoxyribose and adenine. The polypeptide is 5'-methylthioadenosine/S-adenosylhomocysteine nucleosidase (Marinomonas sp. (strain MWYL1)).